We begin with the raw amino-acid sequence, 98 residues long: A-type ATP synthase subunit F (98 aa).

The protein belongs to the V-ATPase F subunit family. The A-type ATPase is composed of subunits A(3), B(3), C, D, E(1 or 2), F, H(2), I and K(x).

It is found in the cell membrane. Component of the A-type ATP synthase that produces ATP from ADP in the presence of a proton gradient across the membrane. The protein is A-type ATP synthase subunit F of Methanocaldococcus jannaschii (strain ATCC 43067 / DSM 2661 / JAL-1 / JCM 10045 / NBRC 100440) (Methanococcus jannaschii).